The chain runs to 239 residues: Calcium load-activated calcium channel (239 aa).

The Lumenal segment spans residues 1–55; it reads MPRKRKCDLRAVRVGLLLGGGGVYGSRFRFTFPGCRALSPWRVRVQRRRCEMSTM. A helical transmembrane segment spans residues 56–83; sequence FADTLLIVFISVCTALLAEGITWVLVYR. Positions 83 to 140 form a coiled coil; it reads RTDKYKRLKAEVEKQSKKLEKKKETITESAGRQQKKKIERQEEKLKNNNRDLSMVRMK. Residues 84 to 137 are Cytoplasmic-facing; the sequence is TDKYKRLKAEVEKQSKKLEKKKETITESAGRQQKKKIERQEEKLKNNNRDLSMV. The residue at position 111 (serine 111) is a Phosphoserine. Residues 138–157 form a helical membrane-spanning segment; the sequence is RMKSMFAIGFCFTALMGMFN. Over 158 to 171 the chain is Lumenal; sequence SIFDGRVVAKLPFT. The stretch at 172–181 is an intramembrane region; sequence PLSYIQGLSH. The Lumenal segment spans residues 182–191; sequence RNLLGDDTTD. A helical membrane pass occupies residues 192–213; the sequence is CSFIFLYILCTMSIRQNIQKIL. At 214-239 the chain is on the cytoplasmic side; that stretch reads GLAPSRAATKQAGGFLGPPPPSGKFS. Serine 239 bears the Phosphoserine mark.

Belongs to the TMCO1 family. In terms of assembly, homodimer and homotetramer. Homodimer under resting conditions; forms homotetramers following ER calcium overload. Component of the GET- and EMC-like (GEL) complex, composed of RAB5IF/OPTI and TMCO1. The GEL complex is part of the multi-pass translocon (MPT) complex, composed of three subcomplexes, the GEL complex (composed of RAB5IF/OPTI and TMCO1), the BOS complex (composed of NCLN/Nicalin, NOMO and TMEM147) and the PAT complex (composed of WDR83OS/Asterix and CCDC47). The MPT complex associates with the SEC61 complex. Widely expressed in adult and fetal tissues, with higher levels in thymus, prostate, testis and small intestine and lower levels in brain, placenta, lung and kidney. Present in most tissues in the eye, including the trabecular meshwork and retina (at protein level).

The protein resides in the endoplasmic reticulum membrane. Its subcellular location is the golgi apparatus membrane. The protein localises to the mitochondrion membrane. The catalysed reaction is Ca(2+)(in) = Ca(2+)(out). Functionally, endoplasmic reticulum (ER) calcium-selective channel preventing intracellular Ca2(+) stores from overfilling and maintaining calcium homeostasis in the ER. In response to endoplasmic reticulum (ER) Ca2(+) overloading, assembles into a homotetramer, forming a functional calcium-selective channel facilitating Ca2(+) release. Mediates ER Ca2(+) homeostasis in osteoblasts and plays a key role in bone formation, via the CaMKII-HDAC4-RUNX2 signaling axis. Component of the multi-pass translocon (MPT) complex that mediates insertion of multi-pass membrane proteins into the lipid bilayer of membranes. The MPT complex takes over after the SEC61 complex: following membrane insertion of the first few transmembrane segments of proteins by the SEC61 complex, the MPT complex occludes the lateral gate of the SEC61 complex to promote insertion of subsequent transmembrane regions. Within the MPT complex, the GEL subcomplex may mediate insertion of transmembrane regions into the membrane. This chain is Calcium load-activated calcium channel, found in Homo sapiens (Human).